A 217-amino-acid chain; its full sequence is MKFFVDTADTADIAEMAATGLLDGVTTNPSLIAKSGKQFVDVIAEICKIVPGPVSAEVVALDHATMMKEAEVLRKIADNVCIKVPLTIDGLKTCKALSDDGTMVNVTLCFSANQALLAGKAGAAFISPFVGRHDDVGLDGMGLIADIRQIYDNYDFGTEILVASVRHPIHILESAKIGADVMTAPPAVIRALFNHPLTDKGIQGFMADWAKTGQSIL.

The active-site Schiff-base intermediate with substrate is the Lys-83.

Belongs to the transaldolase family. Type 3B subfamily.

The protein localises to the cytoplasm. The catalysed reaction is D-sedoheptulose 7-phosphate + D-glyceraldehyde 3-phosphate = D-erythrose 4-phosphate + beta-D-fructose 6-phosphate. The protein operates within carbohydrate degradation; pentose phosphate pathway; D-glyceraldehyde 3-phosphate and beta-D-fructose 6-phosphate from D-ribose 5-phosphate and D-xylulose 5-phosphate (non-oxidative stage): step 2/3. Functionally, transaldolase is important for the balance of metabolites in the pentose-phosphate pathway. This chain is Probable transaldolase, found in Rhizorhabdus wittichii (strain DSM 6014 / CCUG 31198 / JCM 15750 / NBRC 105917 / EY 4224 / RW1) (Sphingomonas wittichii).